We begin with the raw amino-acid sequence, 210 residues long: Thymidylate kinase (210 aa).

Position 9-16 (9-16) interacts with ATP; it reads GLEGAGKS.

Belongs to the thymidylate kinase family.

It catalyses the reaction dTMP + ATP = dTDP + ADP. Phosphorylation of dTMP to form dTDP in both de novo and salvage pathways of dTTP synthesis. This Aliivibrio salmonicida (strain LFI1238) (Vibrio salmonicida (strain LFI1238)) protein is Thymidylate kinase.